Reading from the N-terminus, the 71-residue chain is Cytotoxic linear peptide IsCT2 (71 aa).

The first 23 residues, Met-1 to Ala-23, serve as a signal peptide directing secretion. A Phenylalanine amide modification is found at Phe-36. Residues Ala-40–Arg-71 constitute a propeptide that is removed on maturation.

Belongs to the non-disulfide-bridged peptide (NDBP) superfamily. Short antimicrobial peptide (group 4) family. Post-translationally, isCT2F is an enzymatic proteolytic cleavage product of IsCT2 by the proteases present in the venom. As to expression, expressed by the venom gland.

The protein localises to the secreted. It is found in the target cell membrane. In terms of biological role, isCT2 shows weak hemolytic activity and antibacterial activity against both Gram-positive and Gram-negative bacteria probably by forming pores in the cell membrane. IsCT2 adopts an amphipathic alpha-helical structure. Its function is as follows. IsCT2f shows neither hemolytic, nor antibacterial activities, surely due to the fact that it cannot apply amphipathic alpha-helical structure. In Opisthacanthus madagascariensis (Scorpion), this protein is Cytotoxic linear peptide IsCT2.